The chain runs to 398 residues: cAMP-dependent protein kinase type 3 (398 aa).

2 positions are modified to phosphoserine: S15 and S55. The region spanning 88–342 (FQILRTLGTG…SEDVKNHPWF (255 aa)) is the Protein kinase domain. ATP-binding positions include 94–102 (LGTGSFGRV) and K117. D211 (proton acceptor) is an active-site residue. One can recognise an AGC-kinase C-terminal domain in the interval 343-398 (NEVIWEKLLARYIETPYEPPIQQGQGDTSQFDRYPEEEFNYGIQGEDPYMDLMKEF).

It belongs to the protein kinase superfamily. AGC Ser/Thr protein kinase family. cAMP subfamily.

The enzyme catalyses L-seryl-[protein] + ATP = O-phospho-L-seryl-[protein] + ADP + H(+). It catalyses the reaction L-threonyl-[protein] + ATP = O-phospho-L-threonyl-[protein] + ADP + H(+). With respect to regulation, activated by cAMP. The sequence is that of cAMP-dependent protein kinase type 3 (TPK3) from Saccharomyces cerevisiae (strain ATCC 204508 / S288c) (Baker's yeast).